Here is a 459-residue protein sequence, read N- to C-terminus: Ribulose bisphosphate carboxylase (459 aa).

Residue Asn-111 participates in substrate binding. Lys-166 (proton acceptor) is an active-site residue. Residue Lys-168 coordinates substrate. Mg(2+) contacts are provided by Lys-191, Asp-193, and Glu-194. Lys-191 carries the post-translational modification N6-carboxylysine. The Proton acceptor role is filled by His-287. Residues Arg-288, His-321, and Ser-368 each coordinate substrate.

The protein belongs to the RuBisCO large chain family. Type II subfamily. In terms of assembly, homodimer. Mg(2+) serves as cofactor.

The catalysed reaction is 2 (2R)-3-phosphoglycerate + 2 H(+) = D-ribulose 1,5-bisphosphate + CO2 + H2O. The enzyme catalyses D-ribulose 1,5-bisphosphate + O2 = 2-phosphoglycolate + (2R)-3-phosphoglycerate + 2 H(+). Its function is as follows. RuBisCO catalyzes two reactions: the carboxylation of D-ribulose 1,5-bisphosphate, the primary event in carbon dioxide fixation, as well as the oxidative fragmentation of the pentose substrate. Both reactions occur simultaneously and in competition at the same active site. This is Ribulose bisphosphate carboxylase from Dechloromonas aromatica (strain RCB).